A 76-amino-acid polypeptide reads, in one-letter code: Small ribosomal subunit protein bS18 (76 aa).

The protein belongs to the bacterial ribosomal protein bS18 family. Part of the 30S ribosomal subunit. Forms a tight heterodimer with protein bS6.

Binds as a heterodimer with protein bS6 to the central domain of the 16S rRNA, where it helps stabilize the platform of the 30S subunit. In Symbiobacterium thermophilum (strain DSM 24528 / JCM 14929 / IAM 14863 / T), this protein is Small ribosomal subunit protein bS18.